The chain runs to 257 residues: Protein YIPF5 (257 aa).

Over 1–124 (MSGFDNLNSG…RASDGSIMNE (124 aa)) the chain is Cytoplasmic. The interaction with Sec23 stretch occupies residues 75-106 (PPTPQTFYGDSFEEEPPLLEELGINFDHIWQK). Residues 125 to 145 (TDLAGPVVFCLAFGATLLLAG) form a helical membrane-spanning segment. Residue Lys-146 is a topological domain, lumenal. Residues 147–167 (IQFGYVYGISAIGCLGMFCLL) form a helical membrane-spanning segment. The Cytoplasmic segment spans residues 168-173 (NLMSMT). Residues 174 to 194 (GVSFGCVASVLGYCLLPMILL) traverse the membrane as a helical segment. The Lumenal segment spans residues 195–196 (SS). Residues 197-217 (FAVVFSLQGMVGILLTATIIG) traverse the membrane as a helical segment. Over 218–236 (WCSFSASKIFISALAMDGQ) the chain is Cytoplasmic. The chain crosses the membrane as a helical span at residues 237 to 257 (QLLVAYPCALLYGVFALISVF).

This sequence belongs to the YIP1 family. In terms of assembly, interacts with the COPII coat components Sec23 (SEC23A and/or SEC23B) and Sec24 (SEC24A and/or SEC24B). Interacts with YIF1A. May interact with RAB1A. Interacts with YIPF3 and YIPF4.

The protein resides in the endoplasmic reticulum membrane. It is found in the golgi apparatus. It localises to the cis-Golgi network membrane. The protein localises to the cytoplasmic vesicle. Its subcellular location is the COPII-coated vesicle. In terms of biological role, plays a role in transport between endoplasmic reticulum and Golgi. In pancreatic beta cells, required to transport proinsulin from endoplasmic reticulum into the Golgi. This chain is Protein YIPF5, found in Rattus norvegicus (Rat).